Reading from the N-terminus, the 146-residue chain is Snaclec jerdonibitin subunit beta (146 aa).

The N-terminal stretch at 1 to 23 (MGRFIFVSFGLLVVFLSLSGTGA) is a signal peptide. Cystine bridges form between cysteine 25/cysteine 36, cysteine 53/cysteine 142, and cysteine 119/cysteine 134. In terms of domain architecture, C-type lectin spans 32–143 (YEGHCYRVFQ…CSKTYPFVCK (112 aa)).

It belongs to the snaclec family. As to quaternary structure, heterodimer of subunits alpha and beta; disulfide-linked. In terms of tissue distribution, expressed by the venom gland.

The protein resides in the secreted. Its function is as follows. Snaclec that dose-dependently inhibits platelet aggregation induced by ristocetin or low-dose thrombin, but not by high-dose thrombin. Binds to GPIbalpha (GP1BA). In vivo, also dose-dependently induces thrombocytopenia of mice and platelet counts remains at very low level even after 18 hours intravenous injection. This is Snaclec jerdonibitin subunit beta from Protobothrops jerdonii (Jerdon's pitviper).